A 139-amino-acid chain; its full sequence is Large-conductance mechanosensitive channel (139 aa).

The next 2 membrane-spanning stretches (helical) occupy residues 9–29 (AFAV…GAAF) and 79–99 (IQTV…VKAI).

This sequence belongs to the MscL family. In terms of assembly, homopentamer.

It localises to the cell inner membrane. Functionally, channel that opens in response to stretch forces in the membrane lipid bilayer. May participate in the regulation of osmotic pressure changes within the cell. The protein is Large-conductance mechanosensitive channel of Pseudomonas putida (strain GB-1).